Consider the following 540-residue polypeptide: 2-isopropylmalate synthase (540 aa).

The region spanning 8–273 is the Pyruvate carboxyltransferase domain; it reads VLIFDTTLRD…FFGRDEDSPT (266 aa). Mn(2+)-binding residues include Asp17, His208, His210, and Asn244. Positions 408 to 540 are regulatory domain; the sequence is QLKLVQVSCG…MAQLDSSPVH (133 aa).

This sequence belongs to the alpha-IPM synthase/homocitrate synthase family. LeuA type 1 subfamily. In terms of assembly, homodimer. It depends on Mn(2+) as a cofactor.

The protein localises to the cytoplasm. The catalysed reaction is 3-methyl-2-oxobutanoate + acetyl-CoA + H2O = (2S)-2-isopropylmalate + CoA + H(+). Its pathway is amino-acid biosynthesis; L-leucine biosynthesis; L-leucine from 3-methyl-2-oxobutanoate: step 1/4. Catalyzes the condensation of the acetyl group of acetyl-CoA with 3-methyl-2-oxobutanoate (2-ketoisovalerate) to form 3-carboxy-3-hydroxy-4-methylpentanoate (2-isopropylmalate). In Synechococcus sp. (strain CC9311), this protein is 2-isopropylmalate synthase.